The following is a 453-amino-acid chain: Alpha-galacturonidase (453 aa).

11-72 (IKIAYIGGGS…SQWEYKSVDS (62 aa)) contacts NAD(+). Asparagine 151 is a binding site for substrate. Residue cysteine 173 coordinates Mn(2+). Catalysis depends on histidine 174, which acts as the Proton donor. Residue histidine 209 participates in Mn(2+) binding.

This sequence belongs to the glycosyl hydrolase 4 family. In terms of assembly, homotetramer. Requires NAD(+) as cofactor. Mn(2+) is required as a cofactor.

It carries out the reaction [(1-&gt;4)-alpha-D-galacturonosyl](n) + H2O = alpha-D-galacturonate + [(1-&gt;4)-alpha-D-galacturonosyl](n-1). Alpha-galacturonidase able to catalyze the hydrolysis of the chromogenic substrate p-nitrophenyl-alpha-D-galacturonic acid (pNPalphaGalUA). It is probable that alpha-1,4-di-galacturonate (GalUA(2)) is the naturally occurring substrate. This Thermoanaerobacter italicus (strain DSM 9252 / Ab9) protein is Alpha-galacturonidase.